The chain runs to 203 residues: ATP-dependent Clp protease proteolytic subunit (203 aa).

S100 acts as the Nucleophile in catalysis. Residue H125 is part of the active site.

Belongs to the peptidase S14 family. As to quaternary structure, fourteen ClpP subunits assemble into 2 heptameric rings which stack back to back to give a disk-like structure with a central cavity, resembling the structure of eukaryotic proteasomes.

It localises to the cytoplasm. It catalyses the reaction Hydrolysis of proteins to small peptides in the presence of ATP and magnesium. alpha-casein is the usual test substrate. In the absence of ATP, only oligopeptides shorter than five residues are hydrolyzed (such as succinyl-Leu-Tyr-|-NHMec, and Leu-Tyr-Leu-|-Tyr-Trp, in which cleavage of the -Tyr-|-Leu- and -Tyr-|-Trp bonds also occurs).. Functionally, cleaves peptides in various proteins in a process that requires ATP hydrolysis. Has a chymotrypsin-like activity. Plays a major role in the degradation of misfolded proteins. The sequence is that of ATP-dependent Clp protease proteolytic subunit from Anaeromyxobacter dehalogenans (strain 2CP-1 / ATCC BAA-258).